A 989-amino-acid chain; its full sequence is Cellulose synthase A catalytic subunit 4 [UDP-forming] (989 aa).

Over Met-1–Lys-184 the chain is Cytoplasmic. Positions 9, 12, 20, 23, 28, 31, 43, and 46 each coordinate Zn(2+). An RING-type; degenerate zinc finger spans residues Cys-9 to Gly-47. The span at Lys-138 to Ala-149 shows a compositional bias: basic residues. Positions Lys-138–Glu-158 are disordered. Residues Leu-185–Tyr-205 traverse the membrane as a helical segment. At Arg-206–Ser-213 the chain is on the extracellular side. The chain crosses the membrane as a helical span at residues Ala-214–Leu-234. The Cytoplasmic portion of the chain corresponds to Asp-235 to Ser-772. 4 residues coordinate UDP-alpha-D-glucose: Ser-272, Lys-278, Glu-279, and Asp-308. Residue Asp-308 is part of the active site. Residues Val-362 to Thr-389 adopt a coiled-coil conformation. UDP-alpha-D-glucose is bound at residue Lys-449. Mn(2+)-binding residues include Lys-450 and Asp-474. Asp-688 is an active-site residue. A helical membrane pass occupies residues Leu-773–Ile-793. Topologically, residues Pro-794–Asn-798 are extracellular. A helical transmembrane segment spans residues Ala-799–Leu-819. The Cytoplasmic segment spans residues Arg-820 to Phe-835. A helical membrane pass occupies residues Trp-836–Ile-856. The Extracellular portion of the chain corresponds to Ala-857–Thr-884. N-linked (GlcNAc...) asparagine glycosylation occurs at Asn-862. A helical transmembrane segment spans residues Thr-885–Phe-905. The Cytoplasmic portion of the chain corresponds to Ser-906–Trp-916. The helical transmembrane segment at Gly-917 to Leu-937 threads the bilayer. The Extracellular portion of the chain corresponds to Lys-938–Arg-946. The chain crosses the membrane as a helical span at residues Thr-947 to Val-967. The Cytoplasmic segment spans residues Lys-968 to Cys-989.

It belongs to the glycosyltransferase 2 family. Plant cellulose synthase subfamily. Requires Mn(2+) as cofactor. The cofactor is Zn(2+).

Its subcellular location is the cell membrane. The enzyme catalyses [(1-&gt;4)-beta-D-glucosyl](n) + UDP-alpha-D-glucose = [(1-&gt;4)-beta-D-glucosyl](n+1) + UDP + H(+). Its pathway is glycan metabolism; plant cellulose biosynthesis. In terms of biological role, catalytic subunit of cellulose synthase terminal complexes ('rosettes'), required for beta-1,4-glucan microfibril crystallization, a major mechanism of the cell wall formation. Involved in the secondary cell wall formation. This chain is Cellulose synthase A catalytic subunit 4 [UDP-forming] (CESA4), found in Oryza sativa subsp. japonica (Rice).